We begin with the raw amino-acid sequence, 299 residues long: MSVTVRVPAKVNVQLAVGAARPDGFHDLANVFLAVSLYDEVTATPAADGLRVTCEGPDAGQVPLDRTNLAARAAEALAARYGRAPDVHLHIAKDIPVAGGMAGGSADGAGALLACDALWGTGASREELLEICAGLGSDVPFSLVGGAALGTGRGERLAELEVGGDFHWVFALAARGLSTPAVFREFDRLGEGLDLPEPVADQAVLDALAKGDAAALAVAVTNDLQPAALSLFPELSDTLAAGRAAGALAALVSGSGPTTAFLATDARSASDIAGVLRASGTCRDVRTAVGAAAGATVLD.

K10 is a catalytic residue. Position 96–106 (96–106 (PVAGGMAGGSA)) interacts with ATP. The active site involves D138.

Belongs to the GHMP kinase family. IspE subfamily.

It catalyses the reaction 4-CDP-2-C-methyl-D-erythritol + ATP = 4-CDP-2-C-methyl-D-erythritol 2-phosphate + ADP + H(+). Its pathway is isoprenoid biosynthesis; isopentenyl diphosphate biosynthesis via DXP pathway; isopentenyl diphosphate from 1-deoxy-D-xylulose 5-phosphate: step 3/6. Catalyzes the phosphorylation of the position 2 hydroxy group of 4-diphosphocytidyl-2C-methyl-D-erythritol. The sequence is that of 4-diphosphocytidyl-2-C-methyl-D-erythritol kinase from Streptomyces coelicolor (strain ATCC BAA-471 / A3(2) / M145).